Reading from the N-terminus, the 485-residue chain is UDP-N-acetylmuramoyl-L-alanyl-D-glutamate--2,6-diaminopimelate ligase (485 aa).

Ser32 provides a ligand contact to UDP-N-acetyl-alpha-D-muramoyl-L-alanyl-D-glutamate. 111–117 (GTNGKTT) is a binding site for ATP. Residues 153 to 154 (TT), Ser180, and Arg188 contribute to the UDP-N-acetyl-alpha-D-muramoyl-L-alanyl-D-glutamate site. Position 220 is an N6-carboxylysine (Lys220). Meso-2,6-diaminopimelate contacts are provided by residues Arg382, 405–408 (DNPR), Gly455, and Glu459. The Meso-diaminopimelate recognition motif motif lies at 405–408 (DNPR).

Belongs to the MurCDEF family. MurE subfamily. It depends on Mg(2+) as a cofactor. In terms of processing, carboxylation is probably crucial for Mg(2+) binding and, consequently, for the gamma-phosphate positioning of ATP.

The protein resides in the cytoplasm. It catalyses the reaction UDP-N-acetyl-alpha-D-muramoyl-L-alanyl-D-glutamate + meso-2,6-diaminopimelate + ATP = UDP-N-acetyl-alpha-D-muramoyl-L-alanyl-gamma-D-glutamyl-meso-2,6-diaminopimelate + ADP + phosphate + H(+). It participates in cell wall biogenesis; peptidoglycan biosynthesis. Its function is as follows. Catalyzes the addition of meso-diaminopimelic acid to the nucleotide precursor UDP-N-acetylmuramoyl-L-alanyl-D-glutamate (UMAG) in the biosynthesis of bacterial cell-wall peptidoglycan. In Chlamydia felis (strain Fe/C-56) (Chlamydophila felis), this protein is UDP-N-acetylmuramoyl-L-alanyl-D-glutamate--2,6-diaminopimelate ligase.